The following is an 866-amino-acid chain: Leucine--tRNA ligase (866 aa).

Positions 59–69 (PYPSGDLHMGH) match the 'HIGH' region motif. The segment at 393-421 (VPVIKTDPQTGEPLLPESAPLESPAETGQ) is disordered. The segment covering 404 to 418 (EPLLPESAPLESPAE) has biased composition (low complexity). Residues 628–632 (AMSKS) carry the 'KMSKS' region motif. An ATP-binding site is contributed by K631.

This sequence belongs to the class-I aminoacyl-tRNA synthetase family.

The protein resides in the cytoplasm. The catalysed reaction is tRNA(Leu) + L-leucine + ATP = L-leucyl-tRNA(Leu) + AMP + diphosphate. This chain is Leucine--tRNA ligase, found in Leifsonia xyli subsp. xyli (strain CTCB07).